A 349-amino-acid polypeptide reads, in one-letter code: Glycerol-3-phosphate dehydrogenase [NAD(P)+] (349 aa).

NADPH is bound by residues serine 31, phenylalanine 32, arginine 52, lysine 53, and lysine 126. Lysine 126, glycine 154, and serine 156 together coordinate sn-glycerol 3-phosphate. Residue alanine 158 coordinates NADPH. Sn-glycerol 3-phosphate contacts are provided by lysine 209, aspartate 262, serine 272, arginine 273, and asparagine 274. Lysine 209 (proton acceptor) is an active-site residue. Arginine 273 lines the NADPH pocket. NADPH is bound by residues valine 297 and glutamate 299.

It belongs to the NAD-dependent glycerol-3-phosphate dehydrogenase family.

It localises to the cytoplasm. The enzyme catalyses sn-glycerol 3-phosphate + NAD(+) = dihydroxyacetone phosphate + NADH + H(+). The catalysed reaction is sn-glycerol 3-phosphate + NADP(+) = dihydroxyacetone phosphate + NADPH + H(+). The protein operates within membrane lipid metabolism; glycerophospholipid metabolism. Its function is as follows. Catalyzes the reduction of the glycolytic intermediate dihydroxyacetone phosphate (DHAP) to sn-glycerol 3-phosphate (G3P), the key precursor for phospholipid synthesis. The polypeptide is Glycerol-3-phosphate dehydrogenase [NAD(P)+] (Clostridium tetani (strain Massachusetts / E88)).